We begin with the raw amino-acid sequence, 675 residues long: G-protein coupled receptor moody (675 aa).

Over 1–44 the chain is Extracellular; it reads MSDETTGSLGDAFSPMDTPTTTIMPPPADVDESGFSHSLLTFAA. The helical transmembrane segment at 45–65 threads the bilayer; the sequence is VMTFLIMIVGICGNLLTVVAL. At 66–73 the chain is on the cytoplasmic side; sequence LKCPKVRN. Residues 74-94 form a helical membrane-spanning segment; it reads VAAAFIISLCIADLLFCALVL. Residues 95 to 115 lie on the Extracellular side of the membrane; it reads PFQGLRFVQGTWRHGEVLCRL. An intrachain disulfide couples Cys-113 to Cys-192. Residues 116-136 traverse the membrane as a helical segment; that stretch reads IPFIQYGNIGVSLLCIAMITI. The Cytoplasmic segment spans residues 137–156; the sequence is NRYVMITHYSLYNRIYKRHW. A helical transmembrane segment spans residues 157-177; it reads IAIMIAACWLFSYGMQLPTLL. Topologically, residues 178–206 are extracellular; the sequence is GAWGRFGYDARLQTCSIMSDRHGHSSKTT. Residues 207 to 227 form a helical membrane-spanning segment; the sequence is LFITAFVIPCLVIIACYAKIF. Over 228–327 the chain is Cytoplasmic; sequence WVVHKSEQRL…AKRNEWRITK (100 aa). The tract at residues 258-316 is disordered; it reads TSMPSGDGANPSQVPAGCRVSSDSSSNYSTDVPDTTPGGAGGGAGVKQQPSRVKDQREV. A compositionally biased stretch (low complexity) spans 278-294; the sequence is SSDSSSNYSTDVPDTTP. A helical transmembrane segment spans residues 328 to 348; it reads MVLAIFLSFVICYLPITIVKV. Topologically, residues 349–359 are extracellular; sequence ADKDVEHPSLH. The helical transmembrane segment at 360 to 380 threads the bilayer; that stretch reads IFSYIMLYLSACINPIIYVIM. Topologically, residues 381–675 are cytoplasmic; that stretch reads NKQYRKAYKT…LMDKKKFPKD (295 aa). Disordered stretches follow at residues 475–568 and 588–675; these read SKSS…GNGS and LPPT…FPKD. Low complexity predominate over residues 536 to 551; that stretch reads SSVISANPSSSPSPSS. Over residues 552 to 565 the composition is skewed to gly residues; the sequence is SGGGIYRPGIGSMG. The span at 666-675 shows a compositional bias: basic and acidic residues; that stretch reads LMDKKKFPKD.

Belongs to the G-protein coupled receptor 1 family.

It localises to the cell membrane. In terms of biological role, required in glia to regulate the acute sensitivity to cocaine and to continuously maintain the proper blood-brain barrier (BBB) function. A moody-mediated signaling pathway functions in glia to regulate nervous system insulation and drug-related behaviors. The sequence is that of G-protein coupled receptor moody from Drosophila pseudoobscura pseudoobscura (Fruit fly).